Here is a 37-residue protein sequence, read N- to C-terminus: Large ribosomal subunit protein bL36 (37 aa).

Belongs to the bacterial ribosomal protein bL36 family.

The protein is Large ribosomal subunit protein bL36 of Desulfotalea psychrophila (strain LSv54 / DSM 12343).